The following is an 87-amino-acid chain: UPF0473 protein Daud_0916 (87 aa).

This sequence belongs to the UPF0473 family.

This chain is UPF0473 protein Daud_0916, found in Desulforudis audaxviator (strain MP104C).